The chain runs to 78 residues: Small integral membrane protein 1 (78 aa).

N-acetylmethionine is present on methionine 1. Positions 1-18 (MQPQESHVHYSRWEDGSR) are enriched in basic and acidic residues. Residues 1–20 (MQPQESHVHYSRWEDGSRDG) are disordered. Residues 1–46 (MQPQESHVHYSRWEDGSRDGVSLGAVSSTEEASRCRRISQRLCTGK) lie on the Cytoplasmic side of the membrane. Residues serine 6, serine 17, serine 22, and serine 27 each carry the phosphoserine modification. A helical; Signal-anchor for type II membrane protein transmembrane segment spans residues 47 to 67 (LGIAMKVLGGVALFWIIFILG). Residues 68–78 (YLTGYYVHKCK) are Extracellular-facing. Positions 68–78 (YLTGYYVHKCK) are displays the Vel antigen.

This sequence belongs to the SMIM1 family. Homooligomer; disulfide-linked. As to expression, highly expressed in the bone marrow and expressed at lower levels in non-hematopoietic tissues. Highly expressed in erythroleukemia cell lines. Up-regulated in CD34+ hematopoietic progenitors cultured toward red blood cells.

The protein resides in the cell membrane. Functionally, regulator of red blood cell formation. The sequence is that of Small integral membrane protein 1 from Homo sapiens (Human).